The sequence spans 162 residues: Probable tRNA (guanine(10)-N2)-dimethyltransferase (162 aa).

This sequence belongs to the methyltransferase superfamily. Trm-G10 family. In terms of assembly, monomer.

The protein resides in the cytoplasm. The enzyme catalyses guanosine(10) in tRNA + 2 S-adenosyl-L-methionine = N(2)-dimethylguanosine(10) in tRNA + 2 S-adenosyl-L-homocysteine + 2 H(+). Functionally, catalyzes the adenosylmethionine-dependent methylation of the exocyclic amino group (N(2)) of guanosine at position 10 of various tRNAs. Acts via a two-step process that leads to the formation of either N(2)-monomethyl (m(2)G) or N(2)-dimethylguanosine (m(2)(2)G). The polypeptide is Probable tRNA (guanine(10)-N2)-dimethyltransferase (trmG10) (Methanothermococcus thermolithotrophicus (Methanococcus thermolithotrophicus)).